The primary structure comprises 337 residues: N-acetyl-gamma-glutamyl-phosphate reductase (337 aa).

Cys149 is an active-site residue.

This sequence belongs to the NAGSA dehydrogenase family. Type 1 subfamily.

The protein localises to the cytoplasm. The enzyme catalyses N-acetyl-L-glutamate 5-semialdehyde + phosphate + NADP(+) = N-acetyl-L-glutamyl 5-phosphate + NADPH + H(+). It participates in amino-acid biosynthesis; L-arginine biosynthesis; N(2)-acetyl-L-ornithine from L-glutamate: step 3/4. Catalyzes the NADPH-dependent reduction of N-acetyl-5-glutamyl phosphate to yield N-acetyl-L-glutamate 5-semialdehyde. This Wolinella succinogenes (strain ATCC 29543 / DSM 1740 / CCUG 13145 / JCM 31913 / LMG 7466 / NCTC 11488 / FDC 602W) (Vibrio succinogenes) protein is N-acetyl-gamma-glutamyl-phosphate reductase.